Here is a 700-residue protein sequence, read N- to C-terminus: Constitutive coactivator of peroxisome proliferator-activated receptor gamma (700 aa).

It belongs to the constitutive coactivator of PPAR-gamma family. As to quaternary structure, interacts with ESR1 and RXRA. Interacts with PPARG; in a ligand-independent manner.

It is found in the nucleus. Functionally, functions as a transactivator of PPARG and ESR1. Functions in adipogenesis through PPARG activation. The chain is Constitutive coactivator of peroxisome proliferator-activated receptor gamma (FAM120B) from Bos taurus (Bovine).